A 132-amino-acid chain; its full sequence is tRNA (cytidine(56)-2'-O)-methyltransferase (132 aa).

Residues Leu35, Gly65–Val69, and Ile83–Glu90 each bind S-adenosyl-L-methionine.

It belongs to the aTrm56 family. As to quaternary structure, homodimer.

Its subcellular location is the cytoplasm. The catalysed reaction is cytidine(56) in tRNA + S-adenosyl-L-methionine = 2'-O-methylcytidine(56) in tRNA + S-adenosyl-L-homocysteine + H(+). Its function is as follows. Specifically catalyzes the AdoMet-dependent 2'-O-ribose methylation of cytidine at position 56 in tRNAs. This Sulfolobus acidocaldarius (strain ATCC 33909 / DSM 639 / JCM 8929 / NBRC 15157 / NCIMB 11770) protein is tRNA (cytidine(56)-2'-O)-methyltransferase.